We begin with the raw amino-acid sequence, 135 residues long: Helix-loop-helix protein 2 (135 aa).

The segment at 1–81 (MMLSPDQAAD…RRATAKYRSA (81 aa)) is disordered. A compositionally biased stretch (basic and acidic residues) spans 10–21 (DSDHPSSTHSDP). The span at 68 to 81 (KRRRRRATAKYRSA) shows a compositional bias: basic residues. The 53-residue stretch at 77-129 (KYRSAHATRERIRVEAFNLAFAELRKLLPTLPPDKKLSKIEILRLAICYISYL) folds into the bHLH domain.

As to quaternary structure, homodimer. Interacts and may form heterodimers with STAT3. In terms of tissue distribution, expressed in developing neurons. Transiently expressed in the cerebellum during postnatal development, exclusively in the premigratory zone of the external granule layer where postmitotic neurons undergo initial stages of neuronal differentiation. Expression is not detected in mature neurons. Expressed in the anterior lobe of the adult pituitary.

It is found in the nucleus. Its function is as follows. Transcription factor which binds the E box motif 5'-CA[TC][AG]TG-3'. Involved in regulating energy expenditure, body mass, voluntary physical activity, mating behavior and reproductive longevity, acting through the hypothalamic-pituitary-gonadal axis. Acts as a transcriptional activator of target genes, including Ndn, Pcsk1, Mc4r. Is also a transcriptional activator of KISS1. May act centrally to regulate function of both white and brown adipose tissue. Together with NHLH1, required to maintain migration and survival of cells in the anterior extramural migration stream (aes), which forms the precerebellar nuclei. Also, in concert with Nhlh1, may determine fate of gonadotropin releasing hormone-1 (GnRH-1) neurons. The chain is Helix-loop-helix protein 2 (Nhlh2) from Mus musculus (Mouse).